Reading from the N-terminus, the 105-residue chain is Guanidinium exporter (105 aa).

Position 1 (Met1) is a topological domain, cytoplasmic. Residues 2-19 (SWIVLLIAGLLEVVWAIG) traverse the membrane as a helical segment. Over 20-28 (LKYTHGFTR) the chain is Periplasmic. A helical transmembrane segment spans residues 29 to 48 (LTPSIITIAAMIVSIAMLSW). The Cytoplasmic portion of the chain corresponds to 49–54 (AMRTLP). The chain crosses the membrane as a helical span at residues 55–77 (VGTAYAVWTGIGAVGAAITGILL). Residues 78 to 86 (LGESASPAR) lie on the Periplasmic side of the membrane. The helical transmembrane segment at 87-104 (LLSLGLIVAGIIGLKLST) threads the bilayer. A topological domain (cytoplasmic) is located at residue His105.

Belongs to the drug/metabolite transporter (DMT) superfamily. Small multidrug resistance (SMR) (TC 2.A.7.1) family. Gdx/SugE subfamily.

It is found in the cell inner membrane. Functionally, guanidinium ion exporter. Couples guanidinium export to the proton motive force, exchanging one guanidinium ion for two protons. In Citrobacter freundii, this protein is Guanidinium exporter.